A 403-amino-acid chain; its full sequence is Dynactin subunit 2-A (403 aa).

A disordered region spans residues 1–26 (MADPKYADLPGIARNEPDVYETSDLP). The stretch at 99 to 132 (PQQKYQRLLHEVQELTQEVEKTQSTVKESAAEEK) forms a coiled coil. Residues 183–203 (AAKTRKNPEGKSPAKGPGPDT) are disordered. Positions 381-401 (KENLATVEDNFSNIDGRIKKL) form a coiled coil.

Belongs to the dynactin subunit 2 family. As to quaternary structure, subunit of dynactin, a multiprotein complex part of a tripartite complex with dynein and a adapter, such as BICDL1, BICD2 or HOOK3. The dynactin complex is built around ACTR1A/ACTB filament and consists of an actin-related filament composed of a shoulder domain, a pointed end and a barbed end. Its length is defined by its flexible shoulder domain. The soulder is composed of 2 DCTN1 subunits, 4 DCTN2 and 2 DCTN3.

The protein localises to the cytoplasm. It is found in the cytoskeleton. It localises to the microtubule organizing center. Its subcellular location is the centrosome. The protein resides in the membrane. In terms of biological role, part of the dynactin complex that activates the molecular motor dynein for ultra-processive transport along microtubules. In the dynactin soulder domain, binds the ACTR1A filament and acts as a molecular ruler to determine the length. Modulates cytoplasmic dynein binding to an organelle, and plays a role in prometaphase chromosome alignment and spindle organization during mitosis. Involved in anchoring microtubules to centrosomes. This chain is Dynactin subunit 2-A (dctn2-a), found in Xenopus laevis (African clawed frog).